Reading from the N-terminus, the 1043-residue chain is Protein translocase subunit SecA (1043 aa).

Residues Gln-143, 161 to 165 (GEGKT), and Asp-665 contribute to the ATP site. Residues 980 to 1005 (ATAAPAAETTTTAKAADAARQQPPAA) show a composition bias toward low complexity. The interval 980 to 1043 (ATAAPAAETT…KYKHCHGRNA (64 aa)) is disordered. Over residues 1008-1022 (EEQKRQPVHVEKTPG) the composition is skewed to basic and acidic residues. Zn(2+) is bound by residues Cys-1027, Cys-1029, Cys-1038, and His-1039. The segment covering 1033 to 1043 (KKYKHCHGRNA) has biased composition (basic residues).

The protein belongs to the SecA family. As to quaternary structure, monomer and homodimer. Part of the essential Sec protein translocation apparatus which comprises SecA, SecYEG and auxiliary proteins SecDF. Other proteins may also be involved. Requires Zn(2+) as cofactor.

Its subcellular location is the cell inner membrane. The protein resides in the cytoplasm. The enzyme catalyses ATP + H2O + cellular proteinSide 1 = ADP + phosphate + cellular proteinSide 2.. Its function is as follows. Part of the Sec protein translocase complex. Interacts with the SecYEG preprotein conducting channel. Has a central role in coupling the hydrolysis of ATP to the transfer of proteins into and across the cell membrane, serving as an ATP-driven molecular motor driving the stepwise translocation of polypeptide chains across the membrane. This chain is Protein translocase subunit SecA, found in Chloroherpeton thalassium (strain ATCC 35110 / GB-78).